The chain runs to 98 residues: Sm-like protein LSM8 (98 aa).

One can recognise a Sm domain in the interval 2 to 78 (AATTGLETLV…IGVIGELDEE (77 aa)).

The protein belongs to the snRNP Sm proteins family. Component of the heptameric LSM2-LSM8 complex that forms a seven-membered ring structure with a donut shape. The LSM subunits are arranged in the order LSM8, LSM2, LSM3, LSM6, LSM5, LSM7 and LSM4. LSM8 subunit interacts only with its two neighboring subunits, LSM2 and LSM4. Interacts with the prefoldin co-chaperone subunits PFD1, PFD2, PFD3, PFD4, PFD5 and PFD6. In terms of tissue distribution, expressed in roots, leaves, stems, flowers and siliques.

Its subcellular location is the nucleus. Functionally, component of the nuclear LSM2-LSM8 complex which is involved splicing nuclear mRNAs. LSM2-LSM8 binds directly to the U6 small nuclear RNAs (snRNAs). LSM8 is essential for the formation of the nuclear LSM2-LSM8 complex involved in the accurate splicing of selected development-related mRNAs through the stabilization of the spliceosomal U6 snRNA. Plays a critical role in the regulation of development-related gene expression. The chain is Sm-like protein LSM8 from Arabidopsis thaliana (Mouse-ear cress).